The following is a 78-amino-acid chain: UPF0349 protein GK2958 (78 aa).

This sequence belongs to the UPF0349 family.

This is UPF0349 protein GK2958 from Geobacillus kaustophilus (strain HTA426).